The following is a 75-amino-acid chain: Tetrahydromethanopterin S-methyltransferase subunit F (75 aa).

A helical transmembrane segment spans residues 53–73 (FAGLACGMVFAGVLLVPLLLL).

Belongs to the MtrF family. The complex is composed of 8 subunits; MtrA, MtrB, MtrC, MtrD, MtrE, MtrF, MtrG and MtrH.

The protein resides in the cell membrane. It carries out the reaction 5-methyl-5,6,7,8-tetrahydromethanopterin + coenzyme M + 2 Na(+)(in) = 5,6,7,8-tetrahydromethanopterin + methyl-coenzyme M + 2 Na(+)(out). It functions in the pathway one-carbon metabolism; methanogenesis from CO(2); methyl-coenzyme M from 5,10-methylene-5,6,7,8-tetrahydromethanopterin: step 2/2. In terms of biological role, part of a complex that catalyzes the formation of methyl-coenzyme M and tetrahydromethanopterin from coenzyme M and methyl-tetrahydromethanopterin. This is an energy-conserving, sodium-ion translocating step. This chain is Tetrahydromethanopterin S-methyltransferase subunit F, found in Methanopyrus kandleri (strain AV19 / DSM 6324 / JCM 9639 / NBRC 100938).